We begin with the raw amino-acid sequence, 333 residues long: Acetyltransferase Pat (333 aa).

3',5'-cyclic AMP-binding positions include 88-91 (GEIA), 98-99 (RS), and arginine 138. The N-acetyltransferase domain occupies 156-318 (LMLRPVLPGD…GELSLGREMV (163 aa)). Residue histidine 173 participates in substrate binding. Aspartate 214 serves as a coordination point for Mg(2+). Residues 238-240 (FTV), 246-251 (GRGIGS), asparagine 277, and arginine 286 each bind substrate.

As to quaternary structure, homodimer. Requires Mg(2+) as cofactor.

Autoinhibited and allosterically activated by 3,5-cyclic adenosine monophosphate (cAMP). An extensive conformational rearrangement relieves this autoinhibition by means of a substrate-mimicking lid that covers the protein-substrate binding surface. Functionally, catalyzes specifically the acetylation of the epsilon-amino group of a highly conserved lysine residue in acetyl-CoA synthetase (ACS). This acetylation results in the inactivation of ACS activity and could be important for mycobacteria to adjust to environmental changes. The polypeptide is Acetyltransferase Pat (Mycobacterium tuberculosis (strain ATCC 25618 / H37Rv)).